A 397-amino-acid chain; its full sequence is Proteasome-activating nucleotidase (397 aa).

A coiled-coil region spans residues Gly12 to Pro58. ATP contacts are provided by residues Gly182–Leu187 and His321. The tract at residues Met395–Gly397 is docks into pockets in the proteasome alpha-ring to cause gate opening.

This sequence belongs to the AAA ATPase family. As to quaternary structure, homohexamer. The hexameric complex has a two-ring architecture resembling a top hat that caps the 20S proteasome core at one or both ends. Upon ATP-binding, the C-terminus of PAN interacts with the alpha-rings of the proteasome core by binding to the intersubunit pockets.

The protein localises to the cytoplasm. ATPase which is responsible for recognizing, binding, unfolding and translocation of substrate proteins into the archaeal 20S proteasome core particle. Is essential for opening the gate of the 20S proteasome via an interaction with its C-terminus, thereby allowing substrate entry and access to the site of proteolysis. Thus, the C-termini of the proteasomal ATPase function like a 'key in a lock' to induce gate opening and therefore regulate proteolysis. Unfolding activity requires energy from ATP hydrolysis, whereas ATP binding alone promotes ATPase-20S proteasome association which triggers gate opening, and supports translocation of unfolded substrates. The chain is Proteasome-activating nucleotidase from Thermococcus gammatolerans (strain DSM 15229 / JCM 11827 / EJ3).